A 302-amino-acid polypeptide reads, in one-letter code: MFFRNLTLFRFPTTLDFSEIETLLPQVQLKPVGPLEMSSRGFISPFGRDEQDVLSHRLEDFLWLTVGGEDKILPGAVVNDLLERKVAEIEEKEGRRPGGKARKRLKDDLIHELLPRAFVKSSRTDAILDLQHGYIAVNTSSRKSGENVMSEIRGALGSFPALPLNAEVAPRAILTGWIAGEPLPEGLSLGEECEMKDPIEGGAVVKCQHQELRGDEIDKHLEAGKQVTKLALVMDDNLSFVLGDDLVIRKLKFLDGALDQLEHSEGDGARAELDARFALMSAEVRRLFLLLEDALKLSKAEA.

It belongs to the RdgC family.

It localises to the cytoplasm. Its subcellular location is the nucleoid. Its function is as follows. May be involved in recombination. The chain is Recombination-associated protein RdgC from Xanthomonas campestris pv. campestris (strain 8004).